The following is a 296-amino-acid chain: Phosphatidylglycerol--prolipoprotein diacylglyceryl transferase (296 aa).

A disordered region spans residues 1–21; that stretch reads MRHRRRPGGRSTAGGTPVSQL. Transmembrane regions (helical) follow at residues 34 to 54, 72 to 92, 108 to 128, 136 to 158, 195 to 215, 227 to 243, and 258 to 278; these read GPLT…VAYI, ELCA…HVIT, FFIW…GLAI, GIRF…AIGR, FHPT…FLLW, LFTL…FWVE, and LNDV…IVLQ. Arg-158 serves as a coordination point for a 1,2-diacyl-sn-glycero-3-phospho-(1'-sn-glycerol).

Belongs to the Lgt family.

The protein resides in the cell membrane. The catalysed reaction is L-cysteinyl-[prolipoprotein] + a 1,2-diacyl-sn-glycero-3-phospho-(1'-sn-glycerol) = an S-1,2-diacyl-sn-glyceryl-L-cysteinyl-[prolipoprotein] + sn-glycerol 1-phosphate + H(+). Its pathway is protein modification; lipoprotein biosynthesis (diacylglyceryl transfer). Functionally, catalyzes the transfer of the diacylglyceryl group from phosphatidylglycerol to the sulfhydryl group of the N-terminal cysteine of a prolipoprotein, the first step in the formation of mature lipoproteins. The sequence is that of Phosphatidylglycerol--prolipoprotein diacylglyceryl transferase from Cutibacterium acnes (strain DSM 16379 / KPA171202) (Propionibacterium acnes).